A 489-amino-acid chain; its full sequence is CBL-interacting serine/threonine-protein kinase 12 (489 aa).

In terms of domain architecture, Protein kinase spans 26–280 (YEMGKLLGHG…FPEIMENSWF (255 aa)). ATP contacts are provided by residues 32–40 (LGHGTFAKV) and Lys-55. Asp-148 acts as the Proton acceptor in catalysis. An activation loop region spans residues 166–195 (DFGLSAVSDQIRQDGLFHTFCGTPAYVAPE). The residue at position 170 (Ser-170) is a Phosphoserine. Thr-184 is subject to Phosphothreonine. The NAF domain occupies 336-360 (PRPASLNAFDIISFSQGFDLSGLFD). The tract at residues 363 to 392 (GEGSRFVSGAPVSKIISKLEEIAKVVSFTV) is PPI.

Belongs to the protein kinase superfamily. CAMK Ser/Thr protein kinase family. SNF1 subfamily. In terms of assembly, interacts with CBL2 and CBL3. The cofactor is Mn(2+). As to expression, expressed in roots and shoots.

The catalysed reaction is L-seryl-[protein] + ATP = O-phospho-L-seryl-[protein] + ADP + H(+). It carries out the reaction L-threonyl-[protein] + ATP = O-phospho-L-threonyl-[protein] + ADP + H(+). Functionally, CIPK serine-threonine protein kinases interact with CBL proteins. Binding of a CBL protein to the regulatory NAF domain of CIPK protein lead to the activation of the kinase in a calcium-dependent manner. The polypeptide is CBL-interacting serine/threonine-protein kinase 12 (CIPK12) (Arabidopsis thaliana (Mouse-ear cress)).